A 310-amino-acid polypeptide reads, in one-letter code: Bifunctional protein FolD 3, chloroplastic (310 aa).

The transit peptide at 1–48 directs the protein to the chloroplast; it reads MFTDCSSSTTSRLIHLYNRNGVFLPRPSVSQFSLRTTASTWRCTLSIR.

This sequence belongs to the tetrahydrofolate dehydrogenase/cyclohydrolase family. Homodimer.

Its subcellular location is the plastid. The protein resides in the chloroplast. The enzyme catalyses (6R)-5,10-methylene-5,6,7,8-tetrahydrofolate + NADP(+) = (6R)-5,10-methenyltetrahydrofolate + NADPH. It catalyses the reaction (6R)-5,10-methenyltetrahydrofolate + H2O = (6R)-10-formyltetrahydrofolate + H(+). Its pathway is one-carbon metabolism; tetrahydrofolate interconversion. Catalyzes the oxidation of 5,10-methylenetetrahydrofolate to 5,10-methenyltetrahydrofolate and then the hydrolysis of 5,10-methenyltetrahydrofolate to 10-formyltetrahydrofolate. This chain is Bifunctional protein FolD 3, chloroplastic (FOLD3), found in Arabidopsis thaliana (Mouse-ear cress).